A 657-amino-acid polypeptide reads, in one-letter code: N-acetylgalactosaminyltransferase 7 (657 aa).

Topologically, residues 1–6 are cytoplasmic; sequence MRLKIG. The chain crosses the membrane as a helical; Signal-anchor for type II membrane protein span at residues 7–29; the sequence is FILRSLLVVGSFLGLVVLWSSLS. The disordered stretch occupies residues 30 to 66; sequence SRPDDPSPLSRMREDRDVNNPLPNRGGNGLAPGDDRF. Over 30-657 the chain is Lumenal; it reads SRPDDPSPLS…KWEMNNIHSV (628 aa). Intrachain disulfides connect C197-C435, C426-C507, C545-C562, C585-C600, and C625-C640. Residues 206-317 form a catalytic subdomain A region; that stretch reads LLTSSVVIVF…VNWYAPLVAP (112 aa). The substrate site is built by D247 and R277. 2 residues coordinate Mn(2+): D301 and H303. The segment at 381–443 is catalytic subdomain B; sequence PYRSPAMAGG…PCSRVGHIYR (63 aa). Position 412 (W412) interacts with substrate. Mn(2+) is bound at residue H440. Residue R443 participates in substrate binding. A Ricin B-type lectin domain is found at 532–652; sequence VEWGEIRGLE…GKMTQKWEMN (121 aa).

The protein belongs to the glycosyltransferase 2 family. GalNAc-T subfamily. It depends on Mn(2+) as a cofactor. As to expression, highly expressed in sublingual gland. Expressed at lower level in stomach, small intestiine and colon.

It is found in the golgi apparatus membrane. It carries out the reaction L-seryl-[protein] + UDP-N-acetyl-alpha-D-galactosamine = a 3-O-[N-acetyl-alpha-D-galactosaminyl]-L-seryl-[protein] + UDP + H(+). The catalysed reaction is L-threonyl-[protein] + UDP-N-acetyl-alpha-D-galactosamine = a 3-O-[N-acetyl-alpha-D-galactosaminyl]-L-threonyl-[protein] + UDP + H(+). Its pathway is protein modification; protein glycosylation. Glycopeptide transferase involved in O-linked oligosaccharide biosynthesis, which catalyzes the transfer of an N-acetyl-D-galactosamine residue to an already glycosylated peptide. In contrast to other proteins of the family, it does not act as a peptide transferase that transfers GalNAc onto serine or threonine residue on the protein receptor, but instead requires the prior addition of a GalNAc on a peptide before adding additional GalNAc moieties. Some peptide transferase activity is however not excluded, considering that its appropriate peptide substrate may remain unidentified. This chain is N-acetylgalactosaminyltransferase 7 (Galnt7), found in Rattus norvegicus (Rat).